The sequence spans 71 residues: DNA-directed RNA polymerase subunit epsilon (71 aa).

It belongs to the RNA polymerase subunit epsilon family. As to quaternary structure, RNAP is composed of a core of 2 alpha, a beta and a beta' subunit. The core is associated with a delta subunit, and at least one of epsilon or omega. When a sigma factor is associated with the core the holoenzyme is formed, which can initiate transcription.

The enzyme catalyses RNA(n) + a ribonucleoside 5'-triphosphate = RNA(n+1) + diphosphate. Its function is as follows. A non-essential component of RNA polymerase (RNAP). The polypeptide is DNA-directed RNA polymerase subunit epsilon (Geobacillus thermodenitrificans (strain NG80-2)).